Here is a 180-residue protein sequence, read N- to C-terminus: Riboflavin kinase (180 aa).

Residues threonine 40 and asparagine 42 each coordinate Mg(2+). The Nucleophile role is filled by glutamate 117.

The protein belongs to the flavokinase family. The cofactor is Zn(2+). Mg(2+) is required as a cofactor.

The catalysed reaction is riboflavin + ATP = FMN + ADP + H(+). The protein operates within cofactor biosynthesis; FMN biosynthesis; FMN from riboflavin (ATP route): step 1/1. Its function is as follows. Catalyzes the phosphorylation of riboflavin (vitamin B2) to form flavin mononucleotide (FMN) coenzyme. The chain is Riboflavin kinase (FMN1) from Meyerozyma guilliermondii (strain ATCC 6260 / CBS 566 / DSM 6381 / JCM 1539 / NBRC 10279 / NRRL Y-324) (Yeast).